The sequence spans 283 residues: SNAP25 homologous protein SNAP32 (283 aa).

Disordered regions lie at residues 1–64 (MSGR…AAAR) and 192–212 (LGLS…EPTS). A compositionally biased stretch (polar residues) spans 198–212 (PPQSNARQFHSEPTS). Positions 218-280 (EMEKAKQDDG…KGANTRARRL (63 aa)) constitute a t-SNARE coiled-coil homology domain.

The protein belongs to the SNAP-25 family. Interacts with SYP121. As to expression, expressed in roots, culms and leaves.

The protein resides in the membrane. Functionally, t-SNARE involved in diverse vesicle trafficking and membrane fusion processes. May be involved in resistance to the rice blast fungus Magnaporthe oryzae. May contribute to host resistance to rice blast through interaction with SYP121. In Oryza sativa subsp. japonica (Rice), this protein is SNAP25 homologous protein SNAP32.